Reading from the N-terminus, the 187-residue chain is Peptidyl-tRNA hydrolase (187 aa).

Y18 lines the tRNA pocket. The active-site Proton acceptor is H23. TRNA-binding residues include F65, N67, and N113.

Belongs to the PTH family. Monomer.

It is found in the cytoplasm. It carries out the reaction an N-acyl-L-alpha-aminoacyl-tRNA + H2O = an N-acyl-L-amino acid + a tRNA + H(+). Functionally, hydrolyzes ribosome-free peptidyl-tRNAs (with 1 or more amino acids incorporated), which drop off the ribosome during protein synthesis, or as a result of ribosome stalling. Catalyzes the release of premature peptidyl moieties from peptidyl-tRNA molecules trapped in stalled 50S ribosomal subunits, and thus maintains levels of free tRNAs and 50S ribosomes. This Coxiella burnetii (strain RSA 331 / Henzerling II) protein is Peptidyl-tRNA hydrolase.